Consider the following 371-residue polypeptide: Nuclear hormone receptor family member nhr-51 (371 aa).

The nuclear receptor DNA-binding region spans 2-77 (NKNCLICHRK…MGMQAFPRRV (76 aa)). 2 consecutive NR C4-type zinc fingers follow at residues 5-25 (CLICHRKAAGQHYGVLSCFAC) and 41-60 (CQKFNKCYEKFIILPKCKAC). The NR LBD domain maps to 98–337 (MDEQRHWRML…KQLVTDTFVD (240 aa)).

This sequence belongs to the nuclear hormone receptor family.

It localises to the nucleus. Functionally, orphan nuclear receptor. The chain is Nuclear hormone receptor family member nhr-51 (nhr-51) from Caenorhabditis elegans.